The following is a 388-amino-acid chain: Succinate--CoA ligase [ADP-forming] subunit beta (388 aa).

Positions 9-244 (KSLFAEYGLP…PSQDDAREAH (236 aa)) constitute an ATP-grasp domain. Residues Lys46, 53 to 55 (GRG), Glu99, Thr102, and Glu107 each bind ATP. Mg(2+) is bound by residues Asn199 and Asp213. Substrate contacts are provided by residues Asn264 and 321-323 (GIV).

This sequence belongs to the succinate/malate CoA ligase beta subunit family. In terms of assembly, heterotetramer of two alpha and two beta subunits. It depends on Mg(2+) as a cofactor.

It carries out the reaction succinate + ATP + CoA = succinyl-CoA + ADP + phosphate. The catalysed reaction is GTP + succinate + CoA = succinyl-CoA + GDP + phosphate. It functions in the pathway carbohydrate metabolism; tricarboxylic acid cycle; succinate from succinyl-CoA (ligase route): step 1/1. Succinyl-CoA synthetase functions in the citric acid cycle (TCA), coupling the hydrolysis of succinyl-CoA to the synthesis of either ATP or GTP and thus represents the only step of substrate-level phosphorylation in the TCA. The beta subunit provides nucleotide specificity of the enzyme and binds the substrate succinate, while the binding sites for coenzyme A and phosphate are found in the alpha subunit. The sequence is that of Succinate--CoA ligase [ADP-forming] subunit beta from Shewanella sp. (strain MR-4).